Reading from the N-terminus, the 541-residue chain is Copper transport protein CutJ (541 aa).

Residues 1–25 (MKRNRWWIILLLFLVFLPKTSFAHA) form the signal peptide. The Cu cation site is built by His24 and His110. The next 8 helical transmembrane spans lie at 146–166 (AILY…LFWY), 180–200 (ILTG…PIQT), 228–248 (SIWI…IPAI), 262–282 (PLIF…AAVV), 293–313 (FLHL…VLLL), 335–355 (WALT…FFII), 370–390 (LLVK…HFLL), and 407–427 (WAIG…PSPP).

It in the N-terminal section; belongs to the CopC family. In the C-terminal section; belongs to the CopD family.

It is found in the cell membrane. Its function is as follows. Involved in uptake of extracellular oxidized copper under copper-limiting conditions. The sequence is that of Copper transport protein CutJ from Bacillus subtilis (strain 168).